The sequence spans 1512 residues: DNA (cytosine-5)-methyltransferase 2 (1512 aa).

A compositionally biased stretch (basic and acidic residues) spans 1–22 (METKVGKQKKRSVDSNDDVSKE). Disordered stretches follow at residues 1 to 35 (METK…RNFK) and 634 to 678 (AIHE…GNSE). Positions 638-662 (VEEEEIEEDEEEDENEEDDIEEEAV) are enriched in acidic residues. BAH domains follow at residues 707–841 (ETVA…FSLP) and 909–1026 (TTLK…KQFP). The SAM-dependent MTase C5-type domain maps to 1071–1505 (LATLDIFAGC…RKLKEALYLK (435 aa)). Cys1176 is an active-site residue.

This sequence belongs to the class I-like SAM-binding methyltransferase superfamily. C5-methyltransferase family. As to expression, expressed at low levels in vegetative and floral organs.

The protein localises to the nucleus. The enzyme catalyses a 2'-deoxycytidine in DNA + S-adenosyl-L-methionine = a 5-methyl-2'-deoxycytidine in DNA + S-adenosyl-L-homocysteine + H(+). Functionally, maintains chromatin CpG methylation that plays a role in genomic imprinting, regulation of embryogenesis and seed viability. Required for proper patterns of CG DNA methylation in dividing cells. The polypeptide is DNA (cytosine-5)-methyltransferase 2 (MET2) (Arabidopsis thaliana (Mouse-ear cress)).